The sequence spans 815 residues: Protein SMAX1-LIKE 3 (815 aa).

The 164-residue stretch at 8 to 171 folds into the Clp R domain; it reads VEQALTADAA…TKVEQAVSLE (164 aa). 2 repeat regions span residues 12–80 and 99–171; these read LTAD…LNRL and ISNA…VSLE. Residues 750–769 are disordered; sequence SRACSPPSNQKSDGSDQPED. Residues 778–782 carry the EAR motif; sequence LDLNL.

The protein belongs to the ClpA/ClpB family. As to quaternary structure, interacts probably with TPL/TPR in an EAR-motif dependent manner. As to expression, expressed in roots and seedlings.

Functionally, may function in a transcriptional corepressor complex. This Arabidopsis thaliana (Mouse-ear cress) protein is Protein SMAX1-LIKE 3.